Reading from the N-terminus, the 465-residue chain is Fumarate hydratase class II (465 aa).

Residues 98 to 100, Arg126, 129 to 132, 139 to 141, and Thr187 each bind substrate; these read SGT, HPND, and SSN. The Proton donor/acceptor role is filled by His188. Residue Ser318 is part of the active site. Substrate contacts are provided by residues Ser319 and 324-326; that span reads KVN.

The protein belongs to the class-II fumarase/aspartase family. Fumarase subfamily. In terms of assembly, homotetramer.

The protein resides in the cytoplasm. The enzyme catalyses (S)-malate = fumarate + H2O. It participates in carbohydrate metabolism; tricarboxylic acid cycle; (S)-malate from fumarate: step 1/1. Its function is as follows. Involved in the TCA cycle. Catalyzes the stereospecific interconversion of fumarate to L-malate. This is Fumarate hydratase class II from Yersinia pestis.